Here is a 453-residue protein sequence, read N- to C-terminus: Cytochrome P450 monooxygenase PC-20 (453 aa).

Helical transmembrane passes span 5 to 25 and 49 to 69; these read LGPF…LCVI and LGVV…LFCV. Cysteine 387 contacts heme.

This sequence belongs to the cytochrome P450 family. Heme is required as a cofactor.

The protein localises to the membrane. It participates in secondary metabolite biosynthesis. In terms of biological role, cytochrome P450 monooxygenase; part of the gene cluster that mediates the biosynthesis of the indole diterpenes penitrems. The geranylgeranyl diphosphate (GGPP) synthase penG catalyzes the first step in penitrem biosynthesis via conversion of farnesyl pyrophosphate and isopentyl pyrophosphate into geranylgeranyl pyrophosphate (GGPP). Condensation of indole-3-glycerol phosphate with GGPP by the prenyl transferase penC then forms 3-geranylgeranylindole (3-GGI). Epoxidation by the FAD-dependent monooxygenase penM leads to a epoxidized-GGI that is substrate of the terpene cyclase penB for cyclization to yield paspaline. Paspaline is subsequently converted to 13-desoxypaxilline by the cytochrome P450 monooxygenase penP, the latter being then converted to paxilline by the cytochrome P450 monooxygenase penQ. Paxilline is converted to beta-paxitriol via C-10 ketoreduction by the short-chain dehydrogenase PC-15 which can be monoprenylated at the C-20 by the indole diterpene prenyltransferase penD. A two-step elimination (acetylation and elimination) process performed by the O-acetyltransferase PC-16 and the P.simplicissimum ptmI-ortholog not yet identified in P.crustosum, leads to the production of the prenylated form of penijanthine. The FAD-linked oxidoreductase ptmO then converts the prenylated form of penijanthine into PC-M5 which is in turn transformed into PC-M4 by the aromatic dimethylallyltransferase PC-22. A series of oxidation steps involving 4 cytochrome P450 monooxygenases (PC-21, PC-05, PC-23, PC-20) and a FAD-dependent monooxygenase (PC-14) are required for the transformation of PC-M4 to penitrems A and E. Synthesis of these final products is proposed to proceed via penitrems D and C (PC-21, PC-05, PC-14) and penitrems B and F (PC-21, PC-05, PC-14, PC-23). The protein is Cytochrome P450 monooxygenase PC-20 of Penicillium crustosum (Blue mold fungus).